The sequence spans 147 residues: TRAP-T-associated universal stress protein TeaD (147 aa).

ATP-binding positions include 8–10, Val38, 117–122, and 131–133; these read PVD, GAQGTN, and SVA.

This sequence belongs to the universal stress protein A family. Homodimer or homotetramer; in equilibrium. The dimer/tetramer ratio is ATP-dependent. ATP stabilizes dimer-dimer complexes, with one ATP molecule bound to each monomer.

Its subcellular location is the cytoplasm. Its function is as follows. ATP-binding protein that negatively regulates activity of the tripartite ATP-independent periplasmic (TRAP) ectoine transport system TeaABC. May regulate uptake according to the ATP status of the cell. The polypeptide is TRAP-T-associated universal stress protein TeaD (teaD) (Halomonas elongata (strain ATCC 33173 / DSM 2581 / NBRC 15536 / NCIMB 2198 / 1H9)).